We begin with the raw amino-acid sequence, 310 residues long: MISLSSVAIALTTVVGALALPSDQSVNLAARQAITSSQTGTNNGYYYSFWTNGAGSVSYSNGAAGQFSVNWANQGGGDFTCGKGWNPGKAQDISFSGTFTPNGNAYLSIYGWTTGPLVEYYILENFGSYNPGNGMTHVGTLTSDGSDYDIYKHTQVNQPSIVGTSTFDQYWSIRKNKRSSGTVTTANHFSAWASHGMNLGSHNYQILSVEGYQSSGSASMTVSAGSSSSGGSGSGSGSGSGSGSGSGSQTTTAGSSTGTGTGSGSGSGSGGSGGNCAAQWGQCGGQGWNGPTCCSSGTCKASNQWYSQCL.

An N-terminal signal peptide occupies residues 1–19 (MISLSSVAIALTTVVGALA). One can recognise a GH11 domain in the interval 33–223 (AITSSQTGTN…SSGSASMTVS (191 aa)). Glu-119 (nucleophile) is an active-site residue. Catalysis depends on Glu-210, which acts as the Proton donor. Over residues 218–227 (ASMTVSAGSS) the composition is skewed to low complexity. The interval 218 to 274 (ASMTVSAGSSSSGGSGSGSGSGSGSGSGSGSQTTTAGSSTGTGTGSGSGSGSGGSGG) is disordered. Residues 228–246 (SSGGSGSGSGSGSGSGSGS) show a composition bias toward gly residues. Low complexity predominate over residues 247–256 (GSQTTTAGSS). A compositionally biased stretch (gly residues) spans 257-274 (TGTGTGSGSGSGSGGSGG). The region spanning 275 to 310 (NCAAQWGQCGGQGWNGPTCCSSGTCKASNQWYSQCL) is the CBM1 domain.

The protein belongs to the glycosyl hydrolase 11 (cellulase G) family.

Its subcellular location is the secreted. The enzyme catalyses Endohydrolysis of (1-&gt;4)-beta-D-xylosidic linkages in xylans.. The protein operates within glycan degradation; xylan degradation. Functionally, endo-1,4-beta-xylanase involved in the hydrolysis of xylan, a major structural heterogeneous polysaccharide found in plant biomass representing the second most abundant polysaccharide in the biosphere, after cellulose. Hydrolyzes birchwood xylan, beechwood xylan, and oat spelt xylan to produce short-chain xylooligosaccharides, xylopentaose, xylotriose, and xylobiose as the main products. In Penicillium oxalicum, this protein is Endo-1,4-beta-xylanase B (xynB).